Here is a 350-residue protein sequence, read N- to C-terminus: Kievitone hydratase (350 aa).

An N-terminal signal peptide occupies residues 1-19 (MMISSVLVAGVVAVSAALA).

In terms of assembly, homodimer. Glycosylated.

It is found in the secreted. The catalysed reaction is kievitone hydrate = kievitone + H2O. Functionally, converts fungitoxic kievitone to the less toxic kievitone hydrate, and thereby protects the pathogenic fungus against this phytoalexin. The chain is Kievitone hydratase (khs) from Fusarium solani subsp. phaseoli (Nectria haematococca).